The primary structure comprises 188 residues: Large ribosomal subunit protein eL18A (188 aa).

The segment at 153-188 (GKAPSTPHSRTKPYVLSKGRKFERARGRRASRGYKN) is disordered. Basic residues predominate over residues 178-188 (RGRRASRGYKN).

The protein belongs to the eukaryotic ribosomal protein eL18 family. In terms of assembly, component of the large ribosomal subunit.

Its subcellular location is the cytoplasm. Its function is as follows. Component of the large ribosomal subunit. The ribosome is a large ribonucleoprotein complex responsible for the synthesis of proteins in the cell. The polypeptide is Large ribosomal subunit protein eL18A (rpl18-a) (Xenopus laevis (African clawed frog)).